The following is a 214-amino-acid chain: Histidine biosynthesis bifunctional protein HisIE (214 aa).

The phosphoribosyl-AMP cyclohydrolase stretch occupies residues 1-125; that stretch reads MPATALSLPL…ESIEPPPADT (125 aa). The segment at 126–214 is phosphoribosyl-ATP pyrophosphohydrolase; sequence LSQVYNIVCQ…VYEQLQLRRR (89 aa).

It in the N-terminal section; belongs to the PRA-CH family. In the C-terminal section; belongs to the PRA-PH family.

Its subcellular location is the cytoplasm. It carries out the reaction 1-(5-phospho-beta-D-ribosyl)-ATP + H2O = 1-(5-phospho-beta-D-ribosyl)-5'-AMP + diphosphate + H(+). It catalyses the reaction 1-(5-phospho-beta-D-ribosyl)-5'-AMP + H2O = 1-(5-phospho-beta-D-ribosyl)-5-[(5-phospho-beta-D-ribosylamino)methylideneamino]imidazole-4-carboxamide. The protein operates within amino-acid biosynthesis; L-histidine biosynthesis; L-histidine from 5-phospho-alpha-D-ribose 1-diphosphate: step 2/9. It functions in the pathway amino-acid biosynthesis; L-histidine biosynthesis; L-histidine from 5-phospho-alpha-D-ribose 1-diphosphate: step 3/9. This chain is Histidine biosynthesis bifunctional protein HisIE, found in Thermosynechococcus vestitus (strain NIES-2133 / IAM M-273 / BP-1).